A 381-amino-acid chain; its full sequence is 8-amino-7-oxononanoate synthase (381 aa).

Arg27 is a binding site for substrate. 105–106 contributes to the pyridoxal 5'-phosphate binding site; that stretch reads GY. His130 is a binding site for substrate. Residues Ser176, 201–204, and 232–235 contribute to the pyridoxal 5'-phosphate site; these read DEAH and TLSK. N6-(pyridoxal phosphate)lysine is present on Lys235. Thr345 serves as a coordination point for substrate.

The protein belongs to the class-II pyridoxal-phosphate-dependent aminotransferase family. BioF subfamily. In terms of assembly, homodimer. The cofactor is pyridoxal 5'-phosphate.

The enzyme catalyses 6-carboxyhexanoyl-[ACP] + L-alanine + H(+) = (8S)-8-amino-7-oxononanoate + holo-[ACP] + CO2. The protein operates within cofactor biosynthesis; biotin biosynthesis. Functionally, catalyzes the decarboxylative condensation of pimeloyl-[acyl-carrier protein] and L-alanine to produce 8-amino-7-oxononanoate (AON), [acyl-carrier protein], and carbon dioxide. In Mycobacterium avium (strain 104), this protein is 8-amino-7-oxononanoate synthase.